A 382-amino-acid chain; its full sequence is Gap junction alpha-1 protein (382 aa).

The Cytoplasmic segment spans residues G2 to K23. Position 5 is a phosphoserine (S5). Residues V24–A44 traverse the membrane as a helical segment. Residues W45–R76 are Extracellular-facing. Intrachain disulfides connect C54–C192 and C187–C198. A helical transmembrane segment spans residues F77–F97. The Cytoplasmic portion of the chain corresponds to Y98–Y155. K144 is covalently cross-linked (Glycyl lysine isopeptide (Lys-Gly) (interchain with G-Cter in SUMO)). Residues I156–I176 traverse the membrane as a helical segment. The Extracellular segment spans residues Y177 to T207. The chain crosses the membrane as a helical span at residues I208–L228. The Cytoplasmic portion of the chain corresponds to F229–I382. K237 is covalently cross-linked (Glycyl lysine isopeptide (Lys-Gly) (interchain with G-Cter in SUMO)). Residues S244–I382 are interaction with NOV. Y247 carries the post-translational modification Phosphotyrosine. S255, S257, and S262 each carry phosphoserine. Residues K264–I382 form an interaction with UBQLN4 region. C271 carries the S-nitrosocysteine modification. Phosphothreonine is present on T275. Residues S306, S314, and S325 each carry the phosphoserine modification. The segment covering Q317–A332 has biased composition (polar residues). A disordered region spans residues Q317–I382. T326 bears the Phosphothreonine mark. S328, S330, and S365 each carry phosphoserine. Residues R362–R374 are compositionally biased toward low complexity. At S368 the chain carries Phosphoserine; by PKC/PRKCG and PKC/PRKCD. Phosphoserine is present on residues S369 and S373.

This sequence belongs to the connexin family. Alpha-type (group II) subfamily. In terms of assembly, a connexon is composed of a hexamer of connexins. Interacts with SGSM3. Interacts with RIC1/CIP150. Interacts with CNST and CSNK1D. Interacts (via C-terminus) with TJP1. Interacts (via C-terminus) with SRC (via SH3 domain). Interacts (not ubiquitinated) with UBQLN4 (via UBA domain). Interacts with NOV. Interacts with TMEM65. Interacts with ANK3/ANKG and PKP2. Post-translationally, contains at least one intramolecular disulfide bond. In terms of processing, phosphorylation at Ser-325, Ser-328 and Ser-330 by CK1 modulates gap junction assembly. Phosphorylated at Ser-368 by PRKCG; phosphorylation induces disassembly of gap junction plaques and inhibition of gap junction activity. Phosphorylation at Ser-368 by PRKCD triggers its internalization into small vesicles leading to proteasome-mediated degradation. Sumoylated with SUMO1, SUMO2 and SUMO3, which may regulate the level of functional Cx43 gap junctions at the plasma membrane. May be desumoylated by SENP1 or SENP2. Post-translationally, S-nitrosylation at Cys-271 is enriched at the muscle endothelial gap junction in arteries, it augments channel permeability and may regulate of smooth muscle cell to endothelial cell communication. In terms of processing, acetylated in the developing cortex; leading to delocalization from the cell membrane. In terms of tissue distribution, detected in ventricle and atrium (at protein level).

Its subcellular location is the cell membrane. The protein localises to the cell junction. It localises to the gap junction. It is found in the endoplasmic reticulum. Its function is as follows. Gap junction protein that acts as a regulator of bladder capacity. A gap junction consists of a cluster of closely packed pairs of transmembrane channels, the connexons, through which materials of low MW diffuse from one cell to a neighboring cell. Negative regulator of bladder functional capacity: acts by enhancing intercellular electrical and chemical transmission, thus sensitizing bladder muscles to cholinergic neural stimuli and causing them to contract. May play a role in cell growth inhibition through the regulation of NOV expression and localization. Plays an essential role in gap junction communication in the ventricles. The chain is Gap junction alpha-1 protein (Gja1) from Rattus norvegicus (Rat).